A 326-amino-acid polypeptide reads, in one-letter code: Pyruvate dehydrogenase E1 component subunit alpha (326 aa).

Heterodimer of an alpha and a beta chain. Thiamine diphosphate serves as cofactor.

The enzyme catalyses N(6)-[(R)-lipoyl]-L-lysyl-[protein] + pyruvate + H(+) = N(6)-[(R)-S(8)-acetyldihydrolipoyl]-L-lysyl-[protein] + CO2. Functionally, the pyruvate dehydrogenase complex catalyzes the overall conversion of pyruvate to acetyl-CoA and CO(2). It contains multiple copies of three enzymatic components: pyruvate dehydrogenase (E1), dihydrolipoamide acetyltransferase (E2) and lipoamide dehydrogenase (E3). This chain is Pyruvate dehydrogenase E1 component subunit alpha (pdhA), found in Rickettsia typhi (strain ATCC VR-144 / Wilmington).